The primary structure comprises 492 residues: Ribose import ATP-binding protein RbsA (492 aa).

ABC transporter domains are found at residues 3–239 (IEMK…VGRS) and 249–492 (AEIR…TGGQ). 35 to 42 (GENGAGKS) serves as a coordination point for ATP.

The protein belongs to the ABC transporter superfamily. Ribose importer (TC 3.A.1.2.1) family. As to quaternary structure, the complex is composed of an ATP-binding protein (RbsA), two transmembrane proteins (RbsC) and a solute-binding protein (RbsB).

The protein localises to the cell membrane. It catalyses the reaction D-ribose(out) + ATP + H2O = D-ribose(in) + ADP + phosphate + H(+). In terms of biological role, part of the ABC transporter complex RbsABC involved in ribose import. Responsible for energy coupling to the transport system. In Lactococcus lactis subsp. lactis (strain IL1403) (Streptococcus lactis), this protein is Ribose import ATP-binding protein RbsA.